Here is a 365-residue protein sequence, read N- to C-terminus: Aminomethyltransferase (365 aa).

The protein belongs to the GcvT family. As to quaternary structure, the glycine cleavage system is composed of four proteins: P, T, L and H.

It catalyses the reaction N(6)-[(R)-S(8)-aminomethyldihydrolipoyl]-L-lysyl-[protein] + (6S)-5,6,7,8-tetrahydrofolate = N(6)-[(R)-dihydrolipoyl]-L-lysyl-[protein] + (6R)-5,10-methylene-5,6,7,8-tetrahydrofolate + NH4(+). Its function is as follows. The glycine cleavage system catalyzes the degradation of glycine. This chain is Aminomethyltransferase, found in Chlorobium phaeovibrioides (strain DSM 265 / 1930) (Prosthecochloris vibrioformis (strain DSM 265)).